Reading from the N-terminus, the 375-residue chain is Chaperone protein DnaJ (375 aa).

Positions 4 to 68 (DYYEILGVSR…ETRARYDRFG (65 aa)) constitute a J domain. The CR-type zinc-finger motif lies at 134–216 (GGEKEIRIRH…CGGSGRKQET (83 aa)). 8 residues coordinate Zn(2+): Cys-147, Cys-150, Cys-164, Cys-167, Cys-190, Cys-193, Cys-204, and Cys-207. 4 CXXCXGXG motif repeats span residues 147-154 (CQVCEGSG), 164-171 (CSTCSGSG), 190-197 (CPTCNGSG), and 204-211 (CEACGGSG).

This sequence belongs to the DnaJ family. As to quaternary structure, homodimer. Requires Zn(2+) as cofactor.

The protein localises to the cytoplasm. In terms of biological role, participates actively in the response to hyperosmotic and heat shock by preventing the aggregation of stress-denatured proteins and by disaggregating proteins, also in an autonomous, DnaK-independent fashion. Unfolded proteins bind initially to DnaJ; upon interaction with the DnaJ-bound protein, DnaK hydrolyzes its bound ATP, resulting in the formation of a stable complex. GrpE releases ADP from DnaK; ATP binding to DnaK triggers the release of the substrate protein, thus completing the reaction cycle. Several rounds of ATP-dependent interactions between DnaJ, DnaK and GrpE are required for fully efficient folding. Also involved, together with DnaK and GrpE, in the DNA replication of plasmids through activation of initiation proteins. In Gloeothece citriformis (strain PCC 7424) (Cyanothece sp. (strain PCC 7424)), this protein is Chaperone protein DnaJ.